A 241-amino-acid polypeptide reads, in one-letter code: Proteasome subunit beta type-6 (241 aa).

Residues 1-19 (MATIASEYSSEASNTPIEH) constitute a propeptide that is removed on maturation.

This sequence belongs to the peptidase T1B family. The 26S proteasome consists of a 20S proteasome core and two 19S regulatory subunits. The 20S proteasome core is composed of 28 subunits that are arranged in four stacked rings, resulting in a barrel-shaped structure. The two end rings are each formed by seven alpha subunits, and the two central rings are each formed by seven beta subunits. The catalytic chamber with the active sites is on the inside of the barrel.

It is found in the cytoplasm. The protein resides in the nucleus. Non-catalytic component of the proteasome which degrades poly-ubiquitinated proteins in the cytoplasm and in the nucleus. It is essential for the regulated turnover of proteins and for the removal of misfolded proteins. The proteasome is a multicatalytic proteinase complex that is characterized by its ability to cleave peptides with Arg, Phe, Tyr, Leu, and Glu adjacent to the leaving group at neutral or slightly basic pH. It has an ATP-dependent proteolytic activity. The polypeptide is Proteasome subunit beta type-6 (PRE7) (Saccharomyces cerevisiae (strain ATCC 204508 / S288c) (Baker's yeast)).